The primary structure comprises 246 residues: Ribosomal RNA small subunit methyltransferase G (246 aa).

S-adenosyl-L-methionine is bound by residues glycine 81, phenylalanine 86, 137-138 (AE), and arginine 156. The disordered stretch occupies residues 221 to 246 (LVLIRKERPTPKAYPRRAGVPAKSPL).

It belongs to the methyltransferase superfamily. RNA methyltransferase RsmG family.

It is found in the cytoplasm. Its function is as follows. Specifically methylates the N7 position of a guanine in 16S rRNA. In Symbiobacterium thermophilum (strain DSM 24528 / JCM 14929 / IAM 14863 / T), this protein is Ribosomal RNA small subunit methyltransferase G.